The chain runs to 782 residues: HHIP-like protein 1 (782 aa).

The N-terminal stretch at 1–19 (MARARAGALLALWVLGAAA) is a signal peptide. 4 disulfide bridges follow: Cys-181-Cys-521, Cys-185-Cys-528, Cys-399-Cys-417, and Cys-484-Cys-584. N-linked (GlcNAc...) asparagine glycosylation is present at Asn-234. Residues 604–666 (EKFIPKTRST…RRGRLNSASR (63 aa)) form a disordered region. Over residues 610–623 (TRSTPRPTARAPTR) the composition is skewed to low complexity. Residues 632 to 642 (AAPPAPTPRPA) show a composition bias toward pro residues. The SRCR domain maps to 673-776 (VRLVRPAGLS…HDEDAGVVCS (104 aa)). 3 disulfide bridges follow: Cys-700–Cys-765, Cys-713–Cys-775, and Cys-745–Cys-755.

Belongs to the HHIP family.

Its subcellular location is the secreted. The chain is HHIP-like protein 1 (HHIPL1) from Homo sapiens (Human).